A 1211-amino-acid polypeptide reads, in one-letter code: PH domain-containing protein DDB_G0287875 (1211 aa).

The region spanning 5 to 90 (QKKILKVFDQ…YKFFFLNPNG (86 aa)) is the Ras-associating 1 domain. The span at 103–112 (KSQSASTSGS) shows a compositional bias: polar residues. The segment at 103–133 (KSQSASTSGSAPPKKEPPKPQELQQKQHISK) is disordered. One can recognise a PH domain in the interval 132 to 223 (SKGKSGWLLR…WAQELQATMN (92 aa)). Calponin-homology (CH) domains follow at residues 277 to 384 (TTLV…VGYF) and 392 to 502 (FNMR…LSGQ). Disordered regions lie at residues 520–941 (VEPE…TESV) and 973–1110 (TSAT…PKNT). Residues 527–572 (SIRDKQLKLMREKKEEEDRLKKEKEEKEKEEKEKLEKESSAAAAAT) are a coiled coil. The segment covering 528-565 (IRDKQLKLMREKKEEEDRLKKEKEEKEKEEKEKLEKES) has biased composition (basic and acidic residues). Low complexity-rich tracts occupy residues 566 to 596 (SAAA…PLKK), 607 to 646 (PPTV…TLTP), 655 to 668 (KKPA…KPVA), and 676 to 691 (PSSS…TTPS). Residues 703-729 (QLEKEKQDRLEKARLEKEKAEKEEQEF) show a composition bias toward basic and acidic residues. Residues 703-847 (QLEKEKQDRL…ERKHDENDMD (145 aa)) are a coiled coil. The span at 744-753 (LLEQQKQQQE) shows a compositional bias: low complexity. Basic and acidic residues-rich tracts occupy residues 754 to 778 (GQER…QRQI) and 786 to 853 (EARI…KLLE). Over residues 862 to 877 (PTITPPQSLHSSQIIR) the composition is skewed to polar residues. A coiled-coil region spans residues 880-909 (IEEDDQTNSELEMFQNEYNRLQDEEEHINS). 2 stretches are compositionally biased toward low complexity: residues 914 to 936 (GSSG…GASS) and 976 to 1010 (TTSD…TNNN). Positions 1032-1048 (TKEQQSIIDKQTGLVSK) are enriched in polar residues. Positions 1048-1076 (KQSTNNESNEQQQQQQQQQQLQQQQSSQN) form a coiled coil. Residues 1049–1083 (QSTNNESNEQQQQQQQQQQLQQQQSSQNSTTSIST) are compositionally biased toward low complexity. The segment covering 1093–1104 (NEEKEKESEPHK) has biased composition (basic and acidic residues). One can recognise a Ras-associating 2 domain in the interval 1112–1196 (GRVVVRICLE…DRFVFKKNDI (85 aa)).

The polypeptide is PH domain-containing protein DDB_G0287875 (Dictyostelium discoideum (Social amoeba)).